Reading from the N-terminus, the 328-residue chain is Probable voltage-gated potassium channel subunit beta (328 aa).

NADP(+)-binding residues include W21, Q27, and D49. Y54 serves as the catalytic Proton donor/acceptor. 14 residues coordinate NADP(+): S152, Q178, W207, S208, P209, L210, A211, K218, R229, G285, T287, Q291, E294, and N295.

This sequence belongs to the shaker potassium channel beta subunit family. As to quaternary structure, forms heteromultimeric complexes with potassium channel alpha subunits. As to expression, expressed in late-developed leaves with the highest expression in the flag leaf (at protein level).

Its function is as follows. Probable accessory potassium channel protein which modulates the activity of the pore-forming alpha subunit. The chain is Probable voltage-gated potassium channel subunit beta (KOB1) from Oryza sativa subsp. japonica (Rice).